The sequence spans 285 residues: Aldo-keto reductase (285 aa).

165–175 (APLAGGILTGK) contributes to the NADP(+) binding site.

This sequence belongs to the aldo/keto reductase family. Aldo/keto reductase 2 subfamily.

This is Aldo-keto reductase from Babesia bovis.